The chain runs to 217 residues: MKKIGVILSGCGVYDGSEIHEAVLTLLAISRSGAQAVCFAPDKQQVDVINHLTGEAMTETRNVLIEAARITRGEIRPLAQADAAELDALIVPGGFGAAKNLSNFASLGSECTVDRELKALAQAMHQAGKPLGFMCIAPAMLPKIFDFPLRLTIGTDIDTAEVLEEMGAEHVPCPVDDIVVDEDNKIVTTPAYMLAQNIAEAASGIDKLVSRVLVLAE.

The active-site Nucleophile is the Cys135.

Belongs to the peptidase C56 family. Homodimer.

The catalysed reaction is glyoxal + H2O = glycolate + H(+). Functionally, displays glyoxalase activity, catalyzing the conversion of glyoxal to glycolate. However, this apparent glyoxalase activity may reflect a protein deglycase activity, which could be the primary function of this protein like other DJ-1 superfamily members such as PARK7, YajL, YhbO and HchA. Is not able to use methylglyoxal as substrate. The protein is Glyoxalase ElbB of Escherichia coli (strain K12).